Consider the following 159-residue polypeptide: Nucleotide-binding protein PLES_47741 (159 aa).

The protein belongs to the YajQ family.

Nucleotide-binding protein. This is Nucleotide-binding protein PLES_47741 from Pseudomonas aeruginosa (strain LESB58).